Reading from the N-terminus, the 373-residue chain is Integrator complex subunit 15 (373 aa).

It belongs to the Integrator subunit 15 family. As to quaternary structure, belongs to the multiprotein complex Integrator, at least composed of IntS1, IntS2, IntS3, IntS4, omd/IntS5, IntS6, defl/IntS7, IntS8, IntS9, IntS10, IntS11, IntS12, asun/IntS13, IntS14 and IntS15. The core complex associates with protein phosphatase 2A subunits mts/PP2A and Pp2A-29B, to form the Integrator-PP2A (INTAC) complex.

The protein resides in the nucleus. Component of the integrator complex, a multiprotein complex that terminates RNA polymerase II (Pol II) transcription in the promoter-proximal region of genes. The integrator complex provides a quality checkpoint during transcription elongation by driving premature transcription termination of transcripts that are unfavorably configured for transcriptional elongation: the complex terminates transcription by (1) catalyzing dephosphorylation of the C-terminal domain (CTD) of Pol II subunit Rbp1 and Spt5, and (2) degrading the exiting nascent RNA transcript via endonuclease activity. The integrator complex is also involved in the 3'-end processing of the U7 snRNA, and also the spliceosomal snRNAs U1, U2, U4 and U5. The sequence is that of Integrator complex subunit 15 from Drosophila melanogaster (Fruit fly).